Consider the following 255-residue polypeptide: Geranylgeranylglyceryl phosphate synthase (255 aa).

2 residues coordinate Mg(2+): Asp-34 and Thr-64. Sn-glycerol 1-phosphate contacts are provided by residues 182–188 (YLEAGSG), 213–214 (GG), and 235–236 (GN).

Belongs to the GGGP/HepGP synthase family. Group II subfamily. Mg(2+) serves as cofactor.

It is found in the cytoplasm. It catalyses the reaction sn-glycerol 1-phosphate + (2E,6E,10E)-geranylgeranyl diphosphate = sn-3-O-(geranylgeranyl)glycerol 1-phosphate + diphosphate. It functions in the pathway membrane lipid metabolism; glycerophospholipid metabolism. Its function is as follows. Prenyltransferase that catalyzes the transfer of the geranylgeranyl moiety of geranylgeranyl diphosphate (GGPP) to the C3 hydroxyl of sn-glycerol-1-phosphate (G1P). This reaction is the first ether-bond-formation step in the biosynthesis of archaeal membrane lipids. The polypeptide is Geranylgeranylglyceryl phosphate synthase (Saccharolobus islandicus (strain M.16.27) (Sulfolobus islandicus)).